A 156-amino-acid chain; its full sequence is Methylated-DNA--protein-cysteine methyltransferase (156 aa).

The Nucleophile; methyl group acceptor role is filled by C126.

This sequence belongs to the MGMT family.

It is found in the cytoplasm. The enzyme catalyses a 6-O-methyl-2'-deoxyguanosine in DNA + L-cysteinyl-[protein] = S-methyl-L-cysteinyl-[protein] + a 2'-deoxyguanosine in DNA. It catalyses the reaction a 4-O-methyl-thymidine in DNA + L-cysteinyl-[protein] = a thymidine in DNA + S-methyl-L-cysteinyl-[protein]. Its function is as follows. Involved in the cellular defense against the biological effects of O6-methylguanine (O6-MeG) and O4-methylthymine (O4-MeT) in DNA. Repairs the methylated nucleobase in DNA by stoichiometrically transferring the methyl group to a cysteine residue in the enzyme. This is a suicide reaction: the enzyme is irreversibly inactivated. The sequence is that of Methylated-DNA--protein-cysteine methyltransferase from Methanosarcina acetivorans (strain ATCC 35395 / DSM 2834 / JCM 12185 / C2A).